A 520-amino-acid chain; its full sequence is Versicolorin B desaturase (520 aa).

Residues I22 to I42 traverse the membrane as a helical segment. N-linked (GlcNAc...) asparagine glycans are attached at residues N266 and N426. C462 is a binding site for heme.

Belongs to the cytochrome P450 family. It depends on heme as a cofactor.

It is found in the membrane. It carries out the reaction versicolorin B + NADPH + O2 + H(+) = versicolorin A + NADP(+) + 2 H2O. Its pathway is mycotoxin biosynthesis. In terms of biological role, versicolorin B desaturase; part of the fragmented gene cluster that mediates the biosynthesis of dothistromin (DOTH), a polyketide toxin very similar in structure to the aflatoxin precursor, versicolorin B. The first step of the pathway is the conversion of acetate to norsolorinic acid (NOR) and requires the fatty acid synthase subunits hexA and hexB, as well as the polyketide synthase pksA. PksA combines a hexanoyl starter unit and 7 malonyl-CoA extender units to synthesize the precursor NOR. The hexanoyl starter unit is provided to the acyl-carrier protein (ACP) domain by the fungal fatty acid synthase hexA/hexB. The second step is the conversion of NOR to averantin (AVN) and requires the norsolorinic acid ketoreductase nor1, which catalyzes the dehydration of norsolorinic acid to form (1'S)-averantin. The cytochrome P450 monooxygenase avnA then catalyzes the hydroxylation of AVN to 5'hydroxyaverantin (HAVN). The next step is performed by adhA that transforms HAVN to averufin (AVF). Averufin might then be converted to hydroxyversicolorone by cypX and avfA. Hydroxyversicolorone is further converted versiconal hemiacetal acetate (VHA) by moxY. VHA is then the substrate for the versiconal hemiacetal acetate esterase est1 to yield versiconal (VAL). Versicolorin B synthase vbsA then converts VAL to versicolorin B (VERB) by closing the bisfuran ring. Then, the activity of the versicolorin B desaturase verB leads to versicolorin A (VERA). DotB, a predicted chloroperoxidase, may perform epoxidation of the A-ring of VERA. Alternatively, a cytochrome P450, such as cypX or avnA could catalyze this step. It is also possible that another, uncharacterized, cytochrome P450 enzyme is responsible for this step. Opening of the epoxide could potentially be achieved by the epoxide hydrolase epoA. However, epoA seems not to be required for DOTH biosynthesis, but other epoxide hydrolases may have the ability to complement this hydrolysis. Alternatively, opening of the epoxide ring could be achieved non-enzymatically. The next step is the deoxygenation of ring A to yield the 5,8-dihydroxyanthraquinone which is most likely catalyzed by the NADPH dehydrogenase encoded by ver1. The last stages of DOTH biosynthesis are proposed to involve hydroxylation of the bisfuran. OrdB and norB might have oxidative roles here. An alternative possibility is that cytochrome P450 monoogenases such as avnA and cypX might perform these steps in addition to previously proposed steps. The sequence is that of Versicolorin B desaturase from Dothistroma septosporum (strain NZE10 / CBS 128990) (Red band needle blight fungus).